The following is a 118-amino-acid chain: Mediator of RNA polymerase II transcription subunit 11 (118 aa).

Belongs to the Mediator complex subunit 11 family. In terms of assembly, component of the Mediator complex.

The protein localises to the nucleus. In terms of biological role, component of the Mediator complex, a coactivator involved in the regulated transcription of nearly all RNA polymerase II-dependent genes. Mediator functions as a bridge to convey information from gene-specific regulatory proteins to the basal RNA polymerase II transcription machinery. Mediator is recruited to promoters by direct interactions with regulatory proteins and serves as a scaffold for the assembly of a functional pre-initiation complex with RNA polymerase II and the general transcription factors. The chain is Mediator of RNA polymerase II transcription subunit 11 (med11) from Xenopus tropicalis (Western clawed frog).